Here is a 254-residue protein sequence, read N- to C-terminus: Proteasome activator complex subunit 3 (254 aa).

Ala2 bears the N-acetylalanine mark. A phosphoserine mark is found at Ser17 and Ser24. An N6-acetyllysine; by P300/CBP modification is found at Lys195. Ser247 bears the Phosphoserine; by CHEK2 mark.

The protein belongs to the PA28 family. Homoheptamer; the stability of the heptamer is essential for the specific activation of the trypsine-like subunit and inhibition of the chymotrypsin-like and postglutamyl-preferring (PGPH) subunits of the proteasome. Interacts with p53/TP53 and MDM2. Interacts with MAP3K3. Associates with the proteasome. Interacts with CCAR2. Interacts with PSME3IP1 (via C-terminus); the interaction is direct and promotes the association of PSME3 with the 20S proteasome. Interacts with COIL; the interaction is inhibited by PSME3IP1. In terms of assembly, (Microbial infection) Interacts with human cytomegalovirus UL27. Phosphorylated by MAP3K3. Phosphorylation at Ser-247 promotes its association with CCAR2. Post-translationally, acetylation at the major site Lys-195 is important for oligomerization and ability to degrade its target substrates. Deacetylated by SIRT1.

It localises to the nucleus. The protein resides in the cytoplasm. In terms of biological role, subunit of the 11S REG-gamma (also called PA28-gamma) proteasome regulator, a doughnut-shaped homoheptamer which associates with the proteasome. 11S REG-gamma activates the trypsin-like catalytic subunit of the proteasome but inhibits the chymotrypsin-like and postglutamyl-preferring (PGPH) subunits. Facilitates the MDM2-p53/TP53 interaction which promotes ubiquitination- and MDM2-dependent proteasomal degradation of p53/TP53, limiting its accumulation and resulting in inhibited apoptosis after DNA damage. May also be involved in cell cycle regulation. Mediates CCAR2 and CHEK2-dependent SIRT1 inhibition. In Homo sapiens (Human), this protein is Proteasome activator complex subunit 3 (PSME3).